Here is a 234-residue protein sequence, read N- to C-terminus: Enolase-phosphatase E1 (234 aa).

The tract at residues 212 to 234 (RPGNYPQPQHSHFKISSFEGLNP) is disordered.

The protein belongs to the HAD-like hydrolase superfamily. MasA/MtnC family. Monomer. The cofactor is Mg(2+).

It catalyses the reaction 5-methylsulfanyl-2,3-dioxopentyl phosphate + H2O = 1,2-dihydroxy-5-(methylsulfanyl)pent-1-en-3-one + phosphate. Its pathway is amino-acid biosynthesis; L-methionine biosynthesis via salvage pathway; L-methionine from S-methyl-5-thio-alpha-D-ribose 1-phosphate: step 3/6. It functions in the pathway amino-acid biosynthesis; L-methionine biosynthesis via salvage pathway; L-methionine from S-methyl-5-thio-alpha-D-ribose 1-phosphate: step 4/6. In terms of biological role, bifunctional enzyme that catalyzes the enolization of 2,3-diketo-5-methylthiopentyl-1-phosphate (DK-MTP-1-P) into the intermediate 2-hydroxy-3-keto-5-methylthiopentenyl-1-phosphate (HK-MTPenyl-1-P), which is then dephosphorylated to form the acireductone 1,2-dihydroxy-3-keto-5-methylthiopentene (DHK-MTPene). The chain is Enolase-phosphatase E1 from Leptospira interrogans serogroup Icterohaemorrhagiae serovar copenhageni (strain Fiocruz L1-130).